The primary structure comprises 283 residues: Dihydropteroate synthase type-1 (283 aa).

The Pterin-binding domain maps to 6–262 (VTVFGILNLT…APGDLRSAIT (257 aa)). Asn-13 is a binding site for Mg(2+). Residues Asp-86, Asn-105, Asp-177, Lys-216, and 250–252 (RTH) contribute to the (7,8-dihydropterin-6-yl)methyl diphosphate site.

It belongs to the DHPS family. In terms of assembly, homodimer or homotrimer. Mg(2+) serves as cofactor.

It catalyses the reaction (7,8-dihydropterin-6-yl)methyl diphosphate + 4-aminobenzoate = 7,8-dihydropteroate + diphosphate. It participates in cofactor biosynthesis; tetrahydrofolate biosynthesis; 7,8-dihydrofolate from 2-amino-4-hydroxy-6-hydroxymethyl-7,8-dihydropteridine diphosphate and 4-aminobenzoate: step 1/2. Functionally, catalyzes the condensation of para-aminobenzoate (pABA) with 6-hydroxymethyl-7,8-dihydropterin diphosphate (DHPt-PP) to form 7,8-dihydropteroate (H2Pte), the immediate precursor of folate derivatives. Implicated in resistance to sulfonamide. In Mycolicibacterium fortuitum (Mycobacterium fortuitum), this protein is Dihydropteroate synthase type-1 (sulI).